The chain runs to 43 residues: Cytin chain A (43 aa).

This sequence belongs to the protease inhibitor I13 (potato type I serine protease inhibitor) family. As to quaternary structure, heterodimer of an A chain and a B chain, linked by a disulfide bond.

Functionally, inhibitor of chymotrypsin. This Theromyzon tessulatum (Duck leech) protein is Cytin chain A.